Consider the following 401-residue polypeptide: Tetracycline resistance protein, class B (401 aa).

Residues 1–6 (MNSSTK) are Cytoplasmic-facing. A helical transmembrane segment spans residues 7–30 (IALVITLLDAMGIGLIMPVLPTLL). Residues 31-42 (REFIASEDIANH) are Periplasmic-facing. A helical transmembrane segment spans residues 43–61 (FGVLLALYALMQVIFAPWL). Topologically, residues 62 to 71 (GKMSDRFGRR) are cytoplasmic. Residues 72–91 (PVLLLSLIGASLDYLLLAFS) form a helical membrane-spanning segment. At 92-98 (SALWMLY) the chain is on the periplasmic side. A helical transmembrane segment spans residues 99–119 (LGRLLSGITGATGAVAASVIA). Topologically, residues 120–129 (DTTSASQRVK) are cytoplasmic. Residues 130–152 (WFGWLGASFGLGLIAGPIIGGFA) form a helical membrane-spanning segment. The Periplasmic portion of the chain corresponds to 153–158 (GEISPH). A helical transmembrane segment spans residues 159 to 178 (SPFFIAALLNIVTFLVVMFW). Residues 179–211 (FRETKNTRDNTDTEVGVETQSNSVYITLFKTMP) are Cytoplasmic-facing. A helical transmembrane segment spans residues 212-232 (ILLIIYFSAQLIGQIPATVWV). Residues 233–243 (LFTENRFGWNS) are Periplasmic-facing. A helical transmembrane segment spans residues 244–265 (MMVGFSLAGLGLLHSVFQAFVA). Topologically, residues 266–275 (GRIATKWGEK) are cytoplasmic. Residues 276 to 295 (TAVLLGFIADSSAFAFLAFI) form a helical membrane-spanning segment. The Periplasmic portion of the chain corresponds to 296–298 (SEG). A helical transmembrane segment spans residues 299-322 (WLVFPVLILLAGGGIALPALQGVM). The Cytoplasmic portion of the chain corresponds to 323-332 (SIQTKSHQQG). Residues 333–356 (ALQGLLVSLTNATGVIGPLLFAVI) traverse the membrane as a helical segment. The Periplasmic segment spans residues 357-365 (YNHSLPIWD). The chain crosses the membrane as a helical span at residues 366–387 (GWIWIIGLAFYCIIILLSMTFM). Topologically, residues 388–401 (LTPQAQGSKQETSA) are cytoplasmic.

This sequence belongs to the major facilitator superfamily. TCR/Tet family.

The protein localises to the cell inner membrane. Functionally, resistance to tetracycline by an active tetracycline efflux. This is an energy-dependent process that decreases the accumulation of the antibiotic in whole cells. This protein functions as a metal-tetracycline/H(+) antiporter. The polypeptide is Tetracycline resistance protein, class B (tetA) (Escherichia coli).